The chain runs to 400 residues: Subtilisin-like protease CPC735_013700 (400 aa).

A signal peptide spans 1–19; it reads MGFVKILSLSLAATAVADA. The propeptide occupies 20 to 116; it reads ATILSPRYPN…IEPNQIVTIS (97 aa). Positions 36–115 constitute an Inhibitor I9 domain; that stretch reads YIVVMKDGVS…FIEPNQIVTI (80 aa). In terms of domain architecture, Peptidase S8 spans 126–400; sequence SWGLPRISVK…RKLLYNNSGK (275 aa). Active-site charge relay system residues include Asp161 and His192. Asn252 is a glycosylation site (N-linked (GlcNAc...) asparagine). Residue Ser346 is the Charge relay system of the active site. Asn396 carries N-linked (GlcNAc...) asparagine glycosylation.

The protein belongs to the peptidase S8 family.

The protein resides in the secreted. In terms of biological role, secreted subtilisin-like serine protease with keratinolytic activity that contributes to pathogenicity. This chain is Subtilisin-like protease CPC735_013700, found in Coccidioides posadasii (strain C735) (Valley fever fungus).